We begin with the raw amino-acid sequence, 329 residues long: Glucokinase (329 aa).

Residue 13 to 18 (GDIGGT) coordinates ATP.

The protein belongs to the bacterial glucokinase family.

It is found in the cytoplasm. It catalyses the reaction D-glucose + ATP = D-glucose 6-phosphate + ADP + H(+). The chain is Glucokinase from Caulobacter sp. (strain K31).